The following is a 139-amino-acid chain: Large ribosomal subunit protein uL13c (139 aa).

It belongs to the universal ribosomal protein uL13 family. Part of the 50S ribosomal subunit.

It is found in the plastid. The protein resides in the chloroplast. This chain is Large ribosomal subunit protein uL13c, found in Trieres chinensis (Marine centric diatom).